Consider the following 504-residue polypeptide: Mitochondrial-processing peptidase subunit alpha (504 aa).

Belongs to the peptidase M16 family. As to quaternary structure, heterodimer of alpha and beta subunits, forming the mitochondrial processing protease (MPP) in which subunit alpha is involved in substrate recognition and binding and subunit beta is the catalytic subunit.

It localises to the mitochondrion inner membrane. The enzyme catalyses a quinol + 2 Fe(III)-[cytochrome c](out) = a quinone + 2 Fe(II)-[cytochrome c](out) + 2 H(+)(out). In terms of biological role, substrate recognition and binding subunit of the essential mitochondrial processing protease (MPP), which cleaves the mitochondrial sequence off newly imported precursors proteins. This is a component of the ubiquinol-cytochrome c reductase complex (complex III or cytochrome b-c1 complex), which is part of the mitochondrial respiratory chain. Mediates formation of the complex between cytochromes c and c1. The chain is Mitochondrial-processing peptidase subunit alpha (MPP) from Solanum tuberosum (Potato).